Here is a 382-residue protein sequence, read N- to C-terminus: MEFEKLLRLMVEKGGSDLFITAGVPPSMKVNGRVMPVTKTPLSPEQTRETVLGVMNEQQRRDFAENHECNFAISARGIGRFRVSAFYQRNLVGMVLRRIETNIPTLEELKLPEILKKLALTKRGLVIFVGATGTGKSTSLAAMIGYRNKNSTGHIISIEDPIEYIHQHQGCIVTQREVGLDTDSFEVALKNTLRQAPDVIMIGEVRSRETMDHAVAFAETGHLCLATLHANNANQALERIIHFFPADRHGQVWMDLSLNLKAIVAQQLVPTPDGKGRRAVIEVLLNTPLAADLIRKGEVHELKPLMKRSTEQGMQTFDQALYQLYTQGEITYEDALAHADSANDLRLMIKLGSESDADHLSSLTQGLSLEITDDDPAGRRFR.

An ATP-binding site is contributed by 133–138 (GTGKST).

It belongs to the GSP E family. Homohexamer. Interacts with PilT.

It localises to the cytoplasm. Functionally, ATPase component of the type IV pilus (T4P) that plays a role in surface and host cell adhesion, colonization, biofilm maturation, virulence, and twitching, a form of surface-associated motility facilitated by cycles of extension, adhesion, and retraction of T4P fibers. Functions as a PilT-dependent retraction ATPase, providing a functional coupling between PilT and PilU and an optimal mechanism for pilus retraction. This chain is Type IV pilus ATPase PilU (pilU), found in Pseudomonas aeruginosa (strain ATCC 15692 / DSM 22644 / CIP 104116 / JCM 14847 / LMG 12228 / 1C / PRS 101 / PAO1).